Reading from the N-terminus, the 121-residue chain is uncharacterized protein (121 aa).

The HTH gntR-type domain occupies 9-77 (KPIYLQIADQ…RGQGTFIAEK (69 aa)). Residues 37–56 (VREMAIQTKVNPNTIQRTYS) constitute a DNA-binding region (H-T-H motif).

This is an uncharacterized protein from Bacillus subtilis (strain 168).